The chain runs to 698 residues: Ubiquitin-like modifier-activating enzyme ATG7 (698 aa).

Positions 11-13 (FAP) match the FAP motif motif. Lys-41 participates in a covalent cross-link: Glycyl lysine isopeptide (Lys-Gly) (interchain with G-Cter in ubiquitin). Residue Cys-567 is the Glycyl thioester intermediate of the active site. Ser-693 is modified (phosphoserine).

This sequence belongs to the ATG7 family. Homodimer. Interacts with ATG3; this interaction is essential for the transfer of ATG8-like proteins's thioester from ATG7 to ATG3 and plays a role in the conjugation of ATG12 to ATG5. Interacts with ATG12. Forms intermediate conjugates with GABARAPL1. Forms intermediate conjugates with ATG8-like proteins such as GABARAP, GABARAPL2 or MAP1LC3A. Interacts with EP300 acetyltransferase. Interacts with FOXO1. In terms of processing, acetylated by EP300. Post-translationally, polyubiquitinated on Lys-41 via 'Lys-63'-linked ubiquitin by TRIM32; this modification positiely regulates ATG8 and ATG12 activating enzyme activity leading to initiation of autophagy under metabolic stress. In terms of tissue distribution, widely expressed.

It localises to the cytoplasm. The protein resides in the preautophagosomal structure. In terms of biological role, E1-like activating enzyme involved in the 2 ubiquitin-like systems required for cytoplasm to vacuole transport (Cvt) and autophagy. Activates ATG12 for its conjugation with ATG5 as well as the ATG8 family proteins for their conjugation with phosphatidylethanolamine. Both systems are needed for the ATG8 association to Cvt vesicles and autophagosomes membranes. Required for autophagic death induced by caspase-8 inhibition. Facilitates LC3-I lipidation with phosphatidylethanolamine to form LC3-II which is found on autophagosomal membranes. Required for mitophagy which contributes to regulate mitochondrial quantity and quality by eliminating the mitochondria to a basal level to fulfill cellular energy requirements and preventing excess ROS production. Modulates p53/TP53 activity to regulate cell cycle and survival during metabolic stress. Also plays a key role in the maintenance of axonal homeostasis, the prevention of axonal degeneration, the maintenance of hematopoietic stem cells, the formation of Paneth cell granules, as well as in adipose differentiation. Plays a role in regulating the liver clock and glucose metabolism by mediating the autophagic degradation of CRY1 (clock repressor) in a time-dependent manner. This Rattus norvegicus (Rat) protein is Ubiquitin-like modifier-activating enzyme ATG7.